Consider the following 228-residue polypeptide: Ribonuclease S-4 (228 aa).

Residues 1-27 (MGITGMTYMFTMVLSLIVLIFSASTVG) form the signal peptide. Gln36 lines the RNA pocket. Residues Cys42 and Cys49 are joined by a disulfide bond. His60 is a binding site for RNA. His60 serves as the catalytic Proton donor. An intrachain disulfide couples Cys75 to Cys119. An N-linked (GlcNAc) asparagine glycan is attached at Asn87. RNA is bound at residue 98–99 (NV). The N-linked (GlcNAc...) asparagine glycan is linked to Asn101. RNA-binding positions include Phe108, 111-112 (RE), and 115-116 (KH). Residue Glu112 is part of the active site. The active-site Proton acceptor is His116. Asn144, Asn160, and Asn175 each carry an N-linked (GlcNAc...) asparagine glycan. Intrachain disulfides connect Cys183–Cys222 and Cys199–Cys210.

Belongs to the RNase T2 family. In terms of processing, the N-glycans attached at Asn-101, Asn-160 and Asn-175 consist predominantly of disaccharide (GlcNAc-GlcNAc). The N-glycan at 87 is 53% monosaccharide and 47% disaccharide. The N-glycan at Asn-144 contains mannose and xylose.

The protein resides in the secreted. Its subcellular location is the extracellular space. It carries out the reaction a ribonucleotidyl-ribonucleotide-RNA + H2O = a 3'-end 3'-phospho-ribonucleotide-RNA + a 5'-end dephospho-ribonucleoside-RNA + H(+). Self-incompatibility (SI) is the inherited ability of a flowering plant to prevent self-fertilization by discriminating between self and non-self pollen during pollination. In many species, self-incompatibility is controlled by the single, multiallelic locus S. In Pyrus pyrifolia (Chinese pear), this protein is Ribonuclease S-4.